The primary structure comprises 397 residues: Arginine biosynthesis bifunctional protein ArgJ (397 aa).

Substrate contacts are provided by threonine 143, lysine 169, threonine 180, glutamate 266, asparagine 392, and threonine 397. Threonine 180 serves as the catalytic Nucleophile.

This sequence belongs to the ArgJ family. As to quaternary structure, heterotetramer of two alpha and two beta chains.

Its subcellular location is the cytoplasm. It carries out the reaction N(2)-acetyl-L-ornithine + L-glutamate = N-acetyl-L-glutamate + L-ornithine. The catalysed reaction is L-glutamate + acetyl-CoA = N-acetyl-L-glutamate + CoA + H(+). It participates in amino-acid biosynthesis; L-arginine biosynthesis; L-ornithine and N-acetyl-L-glutamate from L-glutamate and N(2)-acetyl-L-ornithine (cyclic): step 1/1. It functions in the pathway amino-acid biosynthesis; L-arginine biosynthesis; N(2)-acetyl-L-ornithine from L-glutamate: step 1/4. With respect to regulation, competitively inhibited by L-ornithine. Catalyzes two activities which are involved in the cyclic version of arginine biosynthesis: the synthesis of N-acetylglutamate from glutamate and acetyl-CoA as the acetyl donor, and of ornithine by transacetylation between N(2)-acetylornithine and glutamate. This chain is Arginine biosynthesis bifunctional protein ArgJ, found in Thermotoga neapolitana (strain ATCC 49049 / DSM 4359 / NBRC 107923 / NS-E).